The following is a 293-amino-acid chain: Urease accessory protein UreD (293 aa).

The disordered stretch occupies residues 1–22 (MAVAQQAWSPGADPAPSAAPVS). Positions 7–22 (AWSPGADPAPSAAPVS) are enriched in low complexity.

This sequence belongs to the UreD family. UreD, UreF and UreG form a complex that acts as a GTP-hydrolysis-dependent molecular chaperone, activating the urease apoprotein by helping to assemble the nickel containing metallocenter of UreC. The UreE protein probably delivers the nickel.

Its subcellular location is the cytoplasm. Required for maturation of urease via the functional incorporation of the urease nickel metallocenter. This chain is Urease accessory protein UreD, found in Alkalilimnicola ehrlichii (strain ATCC BAA-1101 / DSM 17681 / MLHE-1).